The primary structure comprises 342 residues: Cyclin pch1 (342 aa).

Residues 261-342 (LPIDQKNGSH…TDKEMETEAS (82 aa)) are disordered. Positions 278–314 (TPSSLASVSTQATPQHQNSSGRTDSFHSLNTETPSKS) are enriched in polar residues. A Phosphothreonine modification is found at Thr-300. Residue Ser-302 is modified to Phosphoserine. A compositionally biased stretch (basic and acidic residues) spans 329-342 (KSSDTDKEMETEAS).

Belongs to the cyclin family. Cyclin C subfamily. Interacts with cdc2 protein kinase and with the N-terminal domain of cdk9.

The protein localises to the nucleus. Essential for progression through the whole cell cycle. This is Cyclin pch1 (pch1) from Schizosaccharomyces pombe (strain 972 / ATCC 24843) (Fission yeast).